A 142-amino-acid polypeptide reads, in one-letter code: 3-hydroxyacyl-[acyl-carrier-protein] dehydratase FabZ (142 aa).

The active site involves H47.

Belongs to the thioester dehydratase family. FabZ subfamily.

It localises to the cytoplasm. It carries out the reaction a (3R)-hydroxyacyl-[ACP] = a (2E)-enoyl-[ACP] + H2O. Its function is as follows. Involved in unsaturated fatty acids biosynthesis. Catalyzes the dehydration of short chain beta-hydroxyacyl-ACPs and long chain saturated and unsaturated beta-hydroxyacyl-ACPs. The protein is 3-hydroxyacyl-[acyl-carrier-protein] dehydratase FabZ of Thermoanaerobacter pseudethanolicus (strain ATCC 33223 / 39E) (Clostridium thermohydrosulfuricum).